A 276-amino-acid polypeptide reads, in one-letter code: Small ribosomal subunit protein uS3 (276 aa).

In terms of domain architecture, KH type-2 spans 43–111 (IRQLMSTGME…QVQLNILEVK (69 aa)). The span at 218-227 (AQAASAPSRG) shows a compositional bias: low complexity. The segment at 218–276 (AQAASAPSRGPRSDRGGRPGGADRGDRRRRNDRPAADAAPAAEAPAVEAAPAAAEGGQA) is disordered. Residues 228 to 243 (PRSDRGGRPGGADRGD) show a composition bias toward basic and acidic residues. Residues 253 to 276 (ADAAPAAEAPAVEAAPAAAEGGQA) show a composition bias toward low complexity.

Belongs to the universal ribosomal protein uS3 family. Part of the 30S ribosomal subunit. Forms a tight complex with proteins S10 and S14.

Its function is as follows. Binds the lower part of the 30S subunit head. Binds mRNA in the 70S ribosome, positioning it for translation. In Pseudarthrobacter chlorophenolicus (strain ATCC 700700 / DSM 12829 / CIP 107037 / JCM 12360 / KCTC 9906 / NCIMB 13794 / A6) (Arthrobacter chlorophenolicus), this protein is Small ribosomal subunit protein uS3.